The sequence spans 998 residues: General transcription factor II-I (998 aa).

At alanine 2 the chain carries N-acetylalanine. Residue serine 19 is modified to Phosphoserine. Residues lysine 35, lysine 86, lysine 92, and lysine 94 each participate in a glycyl lysine isopeptide (Lys-Gly) (interchain with G-Cter in SUMO2) cross-link. Phosphoserine is present on serine 103. One copy of the GTF2I-like 1 repeat lies at 103–197 (SVDAVEIETL…FLEPKKHLGG (95 aa)). Lysine 130 bears the N6-acetyllysine; alternate mark. A Glycyl lysine isopeptide (Lys-Gly) (interchain with G-Cter in SUMO2); alternate cross-link involves residue lysine 130. Glycyl lysine isopeptide (Lys-Gly) (interchain with G-Cter in SUMO2) cross-links involve residues lysine 140 and lysine 185. A phosphoserine mark is found at serine 207, serine 210, and serine 214. Residue lysine 219 forms a Glycyl lysine isopeptide (Lys-Gly) (interchain with G-Cter in SUMO2) linkage. Residue lysine 221 forms a Glycyl lysine isopeptide (Lys-Gly) (interchain with G-Cter in SUMO2); alternate linkage. Lysine 221 is covalently cross-linked (Glycyl lysine isopeptide (Lys-Gly) (interchain with G-Cter in SUMO1); alternate). The disordered stretch occupies residues 241 to 341 (EESEDPDYYQ…PPPVPEPANA (101 aa)). The residue at position 248 (tyrosine 248) is a Phosphotyrosine; by BTK. Residues 302 to 317 (TSEDPEVEVTIEDDDY) show a composition bias toward acidic residues. The Nuclear localization signal signature appears at 319–326 (PPTKRLKS). Lysine 325 is covalently cross-linked (Glycyl lysine isopeptide (Lys-Gly) (interchain with G-Cter in SUMO2)). Over residues 328–337 (EPPPPPPVPE) the composition is skewed to pro residues. Residue lysine 343 forms a Glycyl lysine isopeptide (Lys-Gly) (interchain with G-Cter in SUMO2) linkage. One copy of the GTF2I-like 2 repeat lies at 352–446 (EKWNARITDL…ELLNSTREDL (95 aa)). At lysine 353 the chain carries N6-acetyllysine; alternate. Residue lysine 353 forms a Glycyl lysine isopeptide (Lys-Gly) (interchain with G-Cter in SUMO2); alternate linkage. Lysine 380 participates in a covalent cross-link: Glycyl lysine isopeptide (Lys-Gly) (interchain with G-Cter in SUMO2). Tyrosine 398 bears the Phosphotyrosine; by BTK mark. Phosphoserine; by PKG/PRKG1 is present on serine 412. Residue lysine 435 forms a Glycyl lysine isopeptide (Lys-Gly) (interchain with G-Cter in SUMO2) linkage. Position 450 is an N6-acetyllysine; alternate (lysine 450). Lysine 450 is covalently cross-linked (Glycyl lysine isopeptide (Lys-Gly) (interchain with G-Cter in SUMO2); alternate). Residues lysine 456, lysine 488, and lysine 494 each participate in a glycyl lysine isopeptide (Lys-Gly) (interchain with G-Cter in SUMO2) cross-link. The stretch at 457–551 (EEWYARITKL…ELLTHSTTEV (95 aa)) is one GTF2I-like 3 repeat. Tyrosine 503 is modified (phosphotyrosine; by BTK). The residue at position 517 (serine 517) is a Phosphoserine. A Glycyl lysine isopeptide (Lys-Gly) (interchain with G-Cter in SUMO2) cross-link involves residue lysine 526. 2 positions are modified to phosphothreonine: threonine 556 and threonine 558. A Glycyl lysine isopeptide (Lys-Gly) (interchain with G-Cter in SUMO2) cross-link involves residue lysine 561. A GTF2I-like 4 repeat occupies 562-656 (EDWNVRITKL…ELVVSYLPPG (95 aa)). Glycyl lysine isopeptide (Lys-Gly) (interchain with G-Cter in SUMO2) cross-links involve residues lysine 660 and lysine 664. Residues 661–714 (INTKALQSPKRPRSPGSNSKVPEIEVTVEGPNNSSPQTSAVRTPTQTNGSNVPF) form a disordered region. At serine 668 the chain carries Phosphoserine. A Glycyl lysine isopeptide (Lys-Gly) (interchain with G-Cter in SUMO2) cross-link involves residue lysine 670. At serine 674 the chain carries Phosphoserine. A Glycyl lysine isopeptide (Lys-Gly) (interchain with G-Cter in SUMO2) cross-link involves residue lysine 680. The span at 690 to 711 (GPNNSSPQTSAVRTPTQTNGSN) shows a compositional bias: polar residues. Lysine 715 carries the N6-acetyllysine; alternate modification. Lysine 715 is covalently cross-linked (Glycyl lysine isopeptide (Lys-Gly) (interchain with G-Cter in SUMO2); alternate). Serine 722 is modified (phosphoserine). Residues 724–818 (EAWNAKITDL…EMFETAIKES (95 aa)) form a GTF2I-like 5 repeat. Serine 784 carries the post-translational modification Phosphoserine; by PKG/PRKG1. Residue lysine 816 forms a Glycyl lysine isopeptide (Lys-Gly) (interchain with G-Cter in SUMO2) linkage. A disordered region spans residues 816 to 836 (KESTSSKSPPRKINSSPNVNT). Position 823 is a phosphoserine (serine 823). Residues lysine 827, lysine 861, lysine 864, lysine 879, and lysine 891 each participate in a glycyl lysine isopeptide (Lys-Gly) (interchain with G-Cter in SUMO2) cross-link. The GTF2I-like 6 repeat unit spans residues 859-953 (LSKVEKARQL…FPGLVINNQL (95 aa)). The interval 960-998 (EGPVIQESAEASQLEVPVTEEIKETDGSSQIKQEPDPTW) is disordered. Residue lysine 991 forms a Glycyl lysine isopeptide (Lys-Gly) (interchain with G-Cter in SUMO2); alternate linkage. Residue lysine 991 forms a Glycyl lysine isopeptide (Lys-Gly) (interchain with G-Cter in SUMO1); alternate linkage.

This sequence belongs to the TFII-I family. Homodimer (Potential). Interacts with SRF and PHOX1. Binds a pyrimidine-rich initiator (Inr) and a recognition site (E-box) for upstream stimulatory factor 1 (USF1). Associates with the PH domain of Bruton's tyrosine kinase (BTK). May be a component of a BHC histone deacetylase complex that contains HDAC1, HDAC2, HMG20B/BRAF35, KDM1A, RCOR1/CoREST, PHF21A/BHC80, ZMYM2, ZNF217, ZMYM3, GSE1 and GTF2I. Interacts with BTK and ARID3A. Interacts with isoform beta of PRKG1. In terms of processing, transiently phosphorylated on tyrosine residues by BTK in response to B-cell receptor stimulation. Phosphorylation on Tyr-248 and Tyr-398, and perhaps, on Tyr-503 contributes to BTK-mediated transcriptional activation. Post-translationally, sumoylated. As to expression, ubiquitous.

Its subcellular location is the cytoplasm. It is found in the nucleus. Functionally, interacts with the basal transcription machinery by coordinating the formation of a multiprotein complex at the C-FOS promoter, and linking specific signal responsive activator complexes. Promotes the formation of stable high-order complexes of SRF and PHOX1 and interacts cooperatively with PHOX1 to promote serum-inducible transcription of a reporter gene deriven by the C-FOS serum response element (SRE). Acts as a coregulator for USF1 by binding independently two promoter elements, a pyrimidine-rich initiator (Inr) and an upstream E-box. Required for the formation of functional ARID3A DNA-binding complexes and for activation of immunoglobulin heavy-chain transcription upon B-lymphocyte activation. This is General transcription factor II-I (Gtf2i) from Mus musculus (Mouse).